Consider the following 226-residue polypeptide: tRNA (guanine-N(7)-)-methyltransferase (226 aa).

The S-adenosyl-L-methionine site is built by D59, E84, and D111. D169 is a binding site for substrate.

The protein belongs to the class I-like SAM-binding methyltransferase superfamily. TrmB family.

It catalyses the reaction guanosine(46) in tRNA + S-adenosyl-L-methionine = N(7)-methylguanosine(46) in tRNA + S-adenosyl-L-homocysteine. Its pathway is tRNA modification; N(7)-methylguanine-tRNA biosynthesis. Functionally, catalyzes the formation of N(7)-methylguanine at position 46 (m7G46) in tRNA. The chain is tRNA (guanine-N(7)-)-methyltransferase from Chloroherpeton thalassium (strain ATCC 35110 / GB-78).